Here is a 143-residue protein sequence, read N- to C-terminus: MAKKIVGFIKLQVPAGKANPSPPIGPALGQRGLNIMEFCKAFNAKTQGMELGLPIPVVITAFADKSFTFIMKTPPATVLIKKASGVQKGSAKPHTDKVGTLTRAQAEEIAKTKQPDLTAADLDAAVRTIAGSARSMGITVEGG.

This sequence belongs to the universal ribosomal protein uL11 family. In terms of assembly, part of the ribosomal stalk of the 50S ribosomal subunit. Interacts with L10 and the large rRNA to form the base of the stalk. L10 forms an elongated spine to which L12 dimers bind in a sequential fashion forming a multimeric L10(L12)X complex. Post-translationally, one or more lysine residues are methylated.

Forms part of the ribosomal stalk which helps the ribosome interact with GTP-bound translation factors. The chain is Large ribosomal subunit protein uL11 from Bordetella pertussis (strain Tohama I / ATCC BAA-589 / NCTC 13251).